Reading from the N-terminus, the 79-residue chain is ATP synthase subunit c (79 aa).

2 consecutive transmembrane segments (helical) span residues 11-31 (IAVA…IGIL) and 53-73 (FFVV…LGLY).

Belongs to the ATPase C chain family. F-type ATPases have 2 components, F(1) - the catalytic core - and F(0) - the membrane proton channel. F(1) has five subunits: alpha(3), beta(3), gamma(1), delta(1), epsilon(1). F(0) has three main subunits: a(1), b(2) and c(10-14). The alpha and beta chains form an alternating ring which encloses part of the gamma chain. F(1) is attached to F(0) by a central stalk formed by the gamma and epsilon chains, while a peripheral stalk is formed by the delta and b chains.

The protein localises to the cell membrane. F(1)F(0) ATP synthase produces ATP from ADP in the presence of a proton or sodium gradient. F-type ATPases consist of two structural domains, F(1) containing the extramembraneous catalytic core and F(0) containing the membrane proton channel, linked together by a central stalk and a peripheral stalk. During catalysis, ATP synthesis in the catalytic domain of F(1) is coupled via a rotary mechanism of the central stalk subunits to proton translocation. In terms of biological role, key component of the F(0) channel; it plays a direct role in translocation across the membrane. A homomeric c-ring of between 10-14 subunits forms the central stalk rotor element with the F(1) delta and epsilon subunits. This chain is ATP synthase subunit c, found in Buchnera aphidicola subsp. Acyrthosiphon pisum (strain 5A).